Reading from the N-terminus, the 450-residue chain is Chitobiosyldiphosphodolichol beta-mannosyltransferase (450 aa).

The Lumenal segment spans residues 1-13 (MSWIQIPWSWVVT). The helical transmembrane segment at 14 to 34 (LIVTYLSLPLIIYYLVPYIFY) threads the bilayer. The Cytoplasmic segment spans residues 35–106 (GNKSSKKRII…PTLTLQGNKR (72 aa)). Residues 107-127 (SIIFLVKKVLFQVSAIIAQLW) constitute an intramembrane region (helical). Over 128 to 450 (ELRGSNYMLI…SAMQELKLVA (323 aa)) the chain is Cytoplasmic.

It belongs to the glycosyltransferase group 1 family.

The protein resides in the endoplasmic reticulum membrane. The enzyme catalyses an N,N'-diacetylchitobiosyl-diphospho-di-trans,poly-cis-dolichol + GDP-alpha-D-mannose = a beta-D-Man-(1-&gt;4)-beta-D-GlcNAc-(1-&gt;4)-alpha-D-GlcNAc-diphospho-di-trans,poly-cis-dolichol + GDP + H(+). It participates in protein modification; protein glycosylation. Participates in the formation of the lipid-linked precursor oligosaccharide for N-glycosylation. Involved in assembling the dolichol-pyrophosphate-GlcNAc(2)-Man(5) intermediate on the cytoplasmic surface of the ER. This is Chitobiosyldiphosphodolichol beta-mannosyltransferase (ALG1) from Candida glabrata (strain ATCC 2001 / BCRC 20586 / JCM 3761 / NBRC 0622 / NRRL Y-65 / CBS 138) (Yeast).